The primary structure comprises 203 residues: MKVVAFERSVQGTGASRRLRNSGKTPGIIYGGAADPKMIELDHNALWHALKKEAFHSSILDLEVAGKSEKALLRAFQMHPFKPLVLHVDFQRVSANDKIHVKVPLHFMNQETAPGVKLGHGLVNHIVNDLEVSCLPADLPEFIEVDVGNMEVGQTLHLTDLKLPKGVTVVTHGDENPAIASISLPAGAASAAEGEGEGETPAA.

It belongs to the bacterial ribosomal protein bL25 family. CTC subfamily. As to quaternary structure, part of the 50S ribosomal subunit; part of the 5S rRNA/L5/L18/L25 subcomplex. Contacts the 5S rRNA. Binds to the 5S rRNA independently of L5 and L18.

This is one of the proteins that binds to the 5S RNA in the ribosome where it forms part of the central protuberance. The protein is Large ribosomal subunit protein bL25 of Cupriavidus pinatubonensis (strain JMP 134 / LMG 1197) (Cupriavidus necator (strain JMP 134)).